The chain runs to 299 residues: Proline iminopeptidase (299 aa).

The AB hydrolase-1 domain occupies 29-279 (PLLLLHGGPG…SRHMAFIDEP (251 aa)). The Nucleophile role is filled by S105. Residue D245 is part of the active site. The active-site Proton donor is the H272.

Belongs to the peptidase S33 family.

The protein localises to the cell envelope. It carries out the reaction Release of N-terminal proline from a peptide.. In terms of biological role, releases the N-terminal proline from various substrates. This is Proline iminopeptidase from Levilactobacillus brevis (strain ATCC 367 / BCRC 12310 / CIP 105137 / JCM 1170 / LMG 11437 / NCIMB 947 / NCTC 947) (Lactobacillus brevis).